We begin with the raw amino-acid sequence, 867 residues long: uncharacterized protein (867 aa).

The SPX domain occupies 1 to 294 (MKFSHSLQFN…GSSLRESYMK (294 aa)). Disordered regions lie at residues 105-152 (QGNN…GQTS) and 165-228 (ESTA…NNNR). Positions 138 to 152 (ITSSNREIYLNGQTS) are enriched in polar residues. Positions 198–223 (GNDDEVEEEDDDDDDEDEDEDEDEDN) are enriched in acidic residues. 12 consecutive transmembrane segments (helical) span residues 406–426 (TIAT…FPVI), 434–454 (CLAL…PLFV), 485–505 (VIFS…FTIA), 537–557 (MFVA…VLCF), 576–596 (ILIV…PISS), 616–636 (FAVS…LLSF), 656–676 (FTGV…LWCL), 683–703 (VFGD…GTGL), 712–732 (FLWT…VVSS), 755–775 (VLLI…HIVA), 797–817 (LFVL…TSGF), and 842–862 (AGIP…TPIM).

The protein belongs to the CitM (TC 2.A.11) transporter family.

Its subcellular location is the endoplasmic reticulum membrane. This is an uncharacterized protein from Schizosaccharomyces pombe (strain 972 / ATCC 24843) (Fission yeast).